The following is a 1390-amino-acid chain: General transcriptional corepressor trfA (1390 aa).

The segment at 53–143 (QQQQQHQQHQ…QQQQQQQQQQ (91 aa)) is disordered. TPR repeat units lie at residues 171–204 (ESIW…NPFS), 206–238 (KALT…ESKN), 239–272 (GEVW…LPNP), 275–308 (PNLW…DNKF), 312–345 (TEIY…PPLP), 349–382 (SDIW…NATH), 384–419 (KVLQ…DSSD), 420–453 (AQTW…DGRN), 454–487 (PTFW…NPFL), and 489–521 (EVWY…DPHN). Disordered regions lie at residues 539–596 (PIGK…NSFV), 632–938 (ERGR…YNNI), and 958–1390 (LDEE…KLER). Over residues 540–557 (IGKDGYDLQNGEHGEHGG) the composition is skewed to basic and acidic residues. Over residues 582 to 593 (QNNRNGNNNGNN) the composition is skewed to low complexity. Residues 632–641 (ERGRGEDMHN) are compositionally biased toward basic and acidic residues. A compositionally biased stretch (low complexity) spans 644 to 744 (HSQYSNSMSM…MNDNVNSKNN (101 aa)). Residues 745-803 (DVLDRRYKGILEREKTSPNGDGRDNRDNIRDNRDNRDSRDGRDNRDGRDSRDRIQEYTR) show a composition bias toward basic and acidic residues. Positions 805-846 (YNNNNNNNNSISSINNNNNNNNNNYNNNNNNNNNNNNNNNNN) are enriched in low complexity. Residues 857 to 871 (HNDRRSYERDNKERI) show a composition bias toward basic and acidic residues. Low complexity-rich tracts occupy residues 872-898 (NNNN…NNNN) and 917-937 (NNSN…NYNN). 4 stretches are compositionally biased toward basic and acidic residues: residues 977-993 (KEAE…KERS), 1000-1029 (EKPD…EKES), 1037-1099 (KEIE…EKES), and 1120-1135 (TKKD…EKKL). The segment covering 1136-1146 (SSVSPTTTAVE) has biased composition (polar residues). Positions 1147–1169 (QSRDETKELEMDTKEDSEKEKKS) are enriched in basic and acidic residues. Low complexity-rich tracts occupy residues 1170–1180 (STTTTAAASES) and 1192–1203 (TTTTTTTTNTTT). The span at 1206 to 1218 (PTHKDKESSKNDD) shows a compositional bias: basic and acidic residues. Positions 1219 to 1228 (TTTTTTTTTT) are enriched in low complexity. Residues 1229 to 1239 (KSAKSPNSSPT) show a composition bias toward polar residues. The segment covering 1240–1263 (RSDEVVEPHQDASQEEINKRKLED) has biased composition (basic and acidic residues). Low complexity-rich tracts occupy residues 1277 to 1289 (STPS…STPS) and 1315 to 1337 (SSSS…TNSS). Residues 1339 to 1374 (KNERDRDRERERERERDREREREREREREREREKNK) show a composition bias toward basic and acidic residues.

Belongs to the CYC8/SSN6 family. In terms of assembly, associates with tupA to form the trfA-tupA corepressor complex.

The protein localises to the nucleus. In terms of biological role, acts as a component of the trfA-tupA corepressor complex which is involved in the repression of many genes in a wide variety of physiological processes. May also be involved in the derepression of at least some target genes. The complex is recruited to target genes by interaction with DNA-bound transcriptional repressors. The complex recruits histone deacetylases to produce a repressive chromatin structure, interacts with hypoacetylated N-terminal tails of histones H3 and H4 that have been programmed for repression by the action of histone deacetylases and interferes directly with the transcriptional machinery by associating with the RNA polymerase II mediator complex. Required for normal growth and for aggregation in early development. Required for a proper chemotactic response to cAMP. The chain is General transcriptional corepressor trfA (trfA) from Dictyostelium discoideum (Social amoeba).